Consider the following 100-residue polypeptide: MAKRSMIEREKKRIKLHQKYESKRQALLEEYNSTSDFNLKLEIHSKIQRLPRNSSKIRIRNRCWKTGRPRGYYRDFGVSRHVLREMAHQCLLPGVTKSSW.

This sequence belongs to the universal ribosomal protein uS14 family. Part of the 30S ribosomal subunit.

It is found in the plastid. Its subcellular location is the chloroplast. Functionally, binds 16S rRNA, required for the assembly of 30S particles. This chain is Small ribosomal subunit protein uS14c, found in Thalassiosira pseudonana (Marine diatom).